The primary structure comprises 205 residues: Peptidyl-tRNA hydrolase (205 aa).

Tyrosine 18 is a binding site for tRNA. Histidine 23 (proton acceptor) is an active-site residue. The tRNA site is built by tyrosine 69, asparagine 71, and asparagine 117.

The protein belongs to the PTH family. In terms of assembly, monomer.

Its subcellular location is the cytoplasm. The enzyme catalyses an N-acyl-L-alpha-aminoacyl-tRNA + H2O = an N-acyl-L-amino acid + a tRNA + H(+). In terms of biological role, hydrolyzes ribosome-free peptidyl-tRNAs (with 1 or more amino acids incorporated), which drop off the ribosome during protein synthesis, or as a result of ribosome stalling. Functionally, catalyzes the release of premature peptidyl moieties from peptidyl-tRNA molecules trapped in stalled 50S ribosomal subunits, and thus maintains levels of free tRNAs and 50S ribosomes. The polypeptide is Peptidyl-tRNA hydrolase (Thermosynechococcus vestitus (strain NIES-2133 / IAM M-273 / BP-1)).